The following is a 208-amino-acid chain: NAD(P)H-quinone oxidoreductase subunit I (208 aa).

4Fe-4S ferredoxin-type domains are found at residues 55–84 (GRIH…VDWV) and 95–124 (RNYS…MTEE). [4Fe-4S] cluster-binding residues include cysteine 64, cysteine 67, cysteine 70, cysteine 74, cysteine 104, cysteine 107, cysteine 110, and cysteine 114.

Belongs to the complex I 23 kDa subunit family. As to quaternary structure, NDH-1 is composed of at least 11 different subunits. The cofactor is [4Fe-4S] cluster.

It localises to the cellular thylakoid membrane. It catalyses the reaction a plastoquinone + NADH + (n+1) H(+)(in) = a plastoquinol + NAD(+) + n H(+)(out). The enzyme catalyses a plastoquinone + NADPH + (n+1) H(+)(in) = a plastoquinol + NADP(+) + n H(+)(out). In terms of biological role, NDH-1 shuttles electrons from an unknown electron donor, via FMN and iron-sulfur (Fe-S) centers, to quinones in the respiratory and/or the photosynthetic chain. The immediate electron acceptor for the enzyme in this species is believed to be plastoquinone. Couples the redox reaction to proton translocation, and thus conserves the redox energy in a proton gradient. This chain is NAD(P)H-quinone oxidoreductase subunit I, found in Prochlorococcus marinus (strain MIT 9215).